The chain runs to 430 residues: Sorting nexin-4 (430 aa).

Residues 1–18 (MDSASADASVTGSGNAKG) are compositionally biased toward polar residues. Residues 1–22 (MDSASADASVTGSGNAKGSSAE) are disordered. The PX domain occupies 33–162 (LEILVSDPQK…IFLVGNEWDT (130 aa)). The a 1,2-diacyl-sn-glycero-3-phospho-(1D-myo-inositol-3-phosphate) site is built by Arg83, Lys109, and Arg128. The stretch at 351 to 414 (ASRRDKINKL…NNLADENIKF (64 aa)) forms a coiled coil.

Belongs to the sorting nexin family.

It localises to the cytoplasm. The protein localises to the cytosol. The protein resides in the preautophagosomal structure membrane. Its subcellular location is the endosome membrane. In terms of biological role, sorting nexin, involved in the separation or division of vacuoles throughout the entire life cycle of the cells. Involved in retrieval of late-Golgi SNAREs from post-Golgi endosomes to the trans-Golgi network, for cytoplasm to vacuole transport (Cvt), and autophagy of large cargos including mitophagy, pexophagy and glycophagy. This is Sorting nexin-4 (SNX4) from Candida glabrata (strain ATCC 2001 / BCRC 20586 / JCM 3761 / NBRC 0622 / NRRL Y-65 / CBS 138) (Yeast).